Here is a 180-residue protein sequence, read N- to C-terminus: Large ribosomal subunit protein uL6 (180 aa).

It belongs to the universal ribosomal protein uL6 family. In terms of assembly, part of the 50S ribosomal subunit.

Functionally, this protein binds to the 23S rRNA, and is important in its secondary structure. It is located near the subunit interface in the base of the L7/L12 stalk, and near the tRNA binding site of the peptidyltransferase center. The polypeptide is Large ribosomal subunit protein uL6 (Dictyoglomus turgidum (strain DSM 6724 / Z-1310)).